The sequence spans 37 residues: Trypsin inhibitor 3 (37 aa).

Intrachain disulfides connect cysteine 4/cysteine 21, cysteine 11/cysteine 25, and cysteine 20/cysteine 36.

Functionally, trypsin inhibitor. This is Trypsin inhibitor 3 from Spinacia oleracea (Spinach).